The following is a 474-amino-acid chain: mRNA cap guanine-N(7) methyltransferase (474 aa).

Polar residues predominate over residues M1–P12. The disordered stretch occupies residues M1–D106. The span at S56 to G100 shows a compositional bias: basic and acidic residues. One can recognise an mRNA cap 0 methyltransferase domain in the interval S170–V474. Residue N179 to N180 participates in mRNA binding. Residues K183, C207, D229, D269, Q299, and Y304 each contribute to the S-adenosyl-L-methionine site.

This sequence belongs to the class I-like SAM-binding methyltransferase superfamily. mRNA cap 0 methyltransferase family.

It localises to the nucleus. The enzyme catalyses a 5'-end (5'-triphosphoguanosine)-ribonucleoside in mRNA + S-adenosyl-L-methionine = a 5'-end (N(7)-methyl 5'-triphosphoguanosine)-ribonucleoside in mRNA + S-adenosyl-L-homocysteine. Functionally, responsible for methylating the 5'-cap structure of mRNAs. This is mRNA cap guanine-N(7) methyltransferase (ABD1) from Candida albicans (strain SC5314 / ATCC MYA-2876) (Yeast).